The following is a 246-amino-acid chain: Sulfate transporter CysZ (246 aa).

The next 4 membrane-spanning stretches (helical) occupy residues 24–44 (LFVL…IGFA), 69–89 (IVWP…FTMV), 148–168 (LLVL…WILF), and 214–234 (LLIP…ATLF).

The protein belongs to the CysZ family.

Its subcellular location is the cell inner membrane. High affinity, high specificity proton-dependent sulfate transporter, which mediates sulfate uptake. Provides the sulfur source for the cysteine synthesis pathway. The sequence is that of Sulfate transporter CysZ from Pseudomonas aeruginosa (strain ATCC 15692 / DSM 22644 / CIP 104116 / JCM 14847 / LMG 12228 / 1C / PRS 101 / PAO1).